Consider the following 900-residue polypeptide: Protein translocase subunit SecA (900 aa).

ATP is bound by residues Gln-87, 105–109, and Asp-510; that span reads GEGKT. The segment at 857 to 890 is disordered; it reads DSLDSLSDGGSDSADGQEYPKVGRNEPCPCGSGK. Over residues 860 to 872 the composition is skewed to low complexity; that stretch reads DSLSDGGSDSADG. Zn(2+) contacts are provided by Cys-884, Cys-886, Cys-895, and His-896.

The protein belongs to the SecA family. As to quaternary structure, monomer and homodimer. Part of the essential Sec protein translocation apparatus which comprises SecA, SecYEG and auxiliary proteins SecDF-YajC and YidC. The cofactor is Zn(2+).

The protein resides in the cell inner membrane. Its subcellular location is the cytoplasm. The catalysed reaction is ATP + H2O + cellular proteinSide 1 = ADP + phosphate + cellular proteinSide 2.. Its function is as follows. Part of the Sec protein translocase complex. Interacts with the SecYEG preprotein conducting channel. Has a central role in coupling the hydrolysis of ATP to the transfer of proteins into and across the cell membrane, serving both as a receptor for the preprotein-SecB complex and as an ATP-driven molecular motor driving the stepwise translocation of polypeptide chains across the membrane. The sequence is that of Protein translocase subunit SecA from Marinomonas sp. (strain MWYL1).